A 195-amino-acid chain; its full sequence is Holliday junction branch migration complex subunit RuvA (195 aa).

The tract at residues 1–64 is domain I; the sequence is MIASIRGVIQ…EDALTLYGFS (64 aa). The segment at 65–139 is domain II; it reads DNAQRSLFEQ…GKIDFRQLAA (75 aa). A flexible linker region spans residues 139 to 143; that stretch reads ASGST. The domain III stretch occupies residues 144-195; the sequence is SVSALDRELSEILVSLGYSAAEAAAAIASLPSDAPPTLEERLRLALRYFGSA.

It belongs to the RuvA family. Homotetramer. Forms an RuvA(8)-RuvB(12)-Holliday junction (HJ) complex. HJ DNA is sandwiched between 2 RuvA tetramers; dsDNA enters through RuvA and exits via RuvB. An RuvB hexamer assembles on each DNA strand where it exits the tetramer. Each RuvB hexamer is contacted by two RuvA subunits (via domain III) on 2 adjacent RuvB subunits; this complex drives branch migration. In the full resolvosome a probable DNA-RuvA(4)-RuvB(12)-RuvC(2) complex forms which resolves the HJ.

The protein resides in the cytoplasm. The RuvA-RuvB-RuvC complex processes Holliday junction (HJ) DNA during genetic recombination and DNA repair, while the RuvA-RuvB complex plays an important role in the rescue of blocked DNA replication forks via replication fork reversal (RFR). RuvA specifically binds to HJ cruciform DNA, conferring on it an open structure. The RuvB hexamer acts as an ATP-dependent pump, pulling dsDNA into and through the RuvAB complex. HJ branch migration allows RuvC to scan DNA until it finds its consensus sequence, where it cleaves and resolves the cruciform DNA. This Chloroflexus aggregans (strain MD-66 / DSM 9485) protein is Holliday junction branch migration complex subunit RuvA.